A 1269-amino-acid polypeptide reads, in one-letter code: DNA-directed RNA polymerase subunit beta (1269 aa).

It belongs to the RNA polymerase beta chain family. The RNAP catalytic core consists of 2 alpha, 1 beta, 1 beta' and 1 omega subunit. When a sigma factor is associated with the core the holoenzyme is formed, which can initiate transcription.

It carries out the reaction RNA(n) + a ribonucleoside 5'-triphosphate = RNA(n+1) + diphosphate. DNA-dependent RNA polymerase catalyzes the transcription of DNA into RNA using the four ribonucleoside triphosphates as substrates. This is DNA-directed RNA polymerase subunit beta from Porphyromonas gingivalis (strain ATCC BAA-308 / W83).